Reading from the N-terminus, the 139-residue chain is Protein LTO1 homolog (139 aa).

Belongs to the LTO1 family.

The polypeptide is Protein LTO1 homolog (Dictyostelium discoideum (Social amoeba)).